The following is a 450-amino-acid chain: UDP-N-acetylmuramoylalanine--D-glutamate ligase (450 aa).

Residue 119–125 participates in ATP binding; that stretch reads GSNGKTT.

The protein belongs to the MurCDEF family.

It localises to the cytoplasm. The catalysed reaction is UDP-N-acetyl-alpha-D-muramoyl-L-alanine + D-glutamate + ATP = UDP-N-acetyl-alpha-D-muramoyl-L-alanyl-D-glutamate + ADP + phosphate + H(+). It participates in cell wall biogenesis; peptidoglycan biosynthesis. In terms of biological role, cell wall formation. Catalyzes the addition of glutamate to the nucleotide precursor UDP-N-acetylmuramoyl-L-alanine (UMA). The protein is UDP-N-acetylmuramoylalanine--D-glutamate ligase of Streptococcus thermophilus (strain ATCC BAA-491 / LMD-9).